The following is a 247-amino-acid chain: MNNFELEKIVNKKLNSNQYNDVIPNGLQIEGRPKIKKIVTGVTACQLLIDLAISNNAHGIIVHHGLFWDNHPKIIKGIYRHRIKSILANNINLYSWHFPLDVHPILGNNAQIGHILNINVRGYIKSCVPWGMLKEPIKSKDMSQLITQKFHRVPFYYGNNITQNIHKIAWCSGKGQKFINFIPEYGVDTFLTGEVSEETIHFAHENKLHFFSIGHHASEINGIKALTNWLKIKFSLDINFINIDNPI.

A divalent metal cation contacts are provided by His-63, His-64, Asp-101, His-215, and Glu-219.

Belongs to the GTP cyclohydrolase I type 2/NIF3 family. In terms of assembly, homohexamer.

The protein is GTP cyclohydrolase 1 type 2 homolog of Buchnera aphidicola subsp. Baizongia pistaciae (strain Bp).